We begin with the raw amino-acid sequence, 455 residues long: MGQAAWKGFVLSLFDYKTAKFVVAKSKKVGLLYRVLQLTILLYLLIWVFLIKKSYQDIDTSLQSAVVTKVKGVAYTNTTMLGERLWDVADFVIPSQGENVFFVVTNLIVTPNQRQGICAEREGIPDGECSEDTDCHAGESVVAGHGLKTGRCLRVGNSTRGTCEIFAWCPVETKSMPTDPLLKDAEGFTIFIKNFIRFPKFNFSKANVLETGNKHFLKTCHFSSTNLYCPIFRLGSIVRWAGADFQDIALKGGVIGIHIEWDCDLDKAASHCNPHYYFNRLDNKHTQSISSGYNFRFARYYRDPHGVEFRDLMKAYGIRFDVIVNGKAGKFSIIPTVINIGSGLALMGAGAFFCDLVLIYLIRKSEFYRDKKFEKVRGQKEEDNVEVEANEMEQELPEDKPLERVHQDEQALELAQSGRKQNSNCQVLFEPARSGLQENAFVNMKPSQILQTVKT.

Over 1–30 the chain is Cytoplasmic; the sequence is MGQAAWKGFVLSLFDYKTAKFVVAKSKKVG. Residues 31 to 50 form a helical membrane-spanning segment; that stretch reads LLYRVLQLTILLYLLIWVFL. At 51 to 339 the chain is on the extracellular side; that stretch reads IKKSYQDIDT…KFSIIPTVIN (289 aa). 69–71 serves as a coordination point for ATP; the sequence is KVK. N-linked (GlcNAc...) asparagine glycosylation is present at Asn77. 3 disulfides stabilise this stretch: Cys118–Cys169, Cys129–Cys152, and Cys135–Cys163. An N-linked (GlcNAc...) asparagine glycan is attached at Asn157. Thr189 is an ATP binding site. N-linked (GlcNAc...) asparagine glycosylation is present at Asn202. 2 cysteine pairs are disulfide-bonded: Cys220–Cys229 and Cys263–Cys272. ATP-binding positions include 294–296 and Lys314; that span reads NFR. Residues 340–362 form a helical membrane-spanning segment; the sequence is IGSGLALMGAGAFFCDLVLIYLI. Topologically, residues 363–455 are cytoplasmic; that stretch reads RKSEFYRDKK…PSQILQTVKT (93 aa).

The protein belongs to the P2X receptor family. Functional P2XRs are organized as homomeric and heteromeric trimers. Homotrimer. Forms heterotrimer with P2RX1. As to expression, expressed in a number of tissues, with highest levels detected in heart and kidney.

The protein localises to the cell membrane. It catalyses the reaction Na(+)(in) = Na(+)(out). It carries out the reaction Ca(2+)(in) = Ca(2+)(out). The catalysed reaction is chloride(in) = chloride(out). Its activity is regulated as follows. Activated by ATP. Slowly desensitizing. Not activated by ATP agonist alpha/beta-methylene-ATP. Highly sensitive to the antagonists suramin and PPADS. ATP-gated nonselective transmembrane cation channel permeable to potassium, sodium and calcium. Unlike other P2RX receptors, the P2X5 receptor is also permeable to chloride. Acts as an important regulator of inflammatory-related bone loss and osteoclast multinucleation. This is P2X purinoceptor 5 from Mus musculus (Mouse).